We begin with the raw amino-acid sequence, 180 residues long: Nucleoside-triphosphatase THEP1 (180 aa).

ATP is bound by residues 18–25 (GRPGVGKT) and 104–111 (LVIMDEIG).

It belongs to the THEP1 NTPase family.

The catalysed reaction is a ribonucleoside 5'-triphosphate + H2O = a ribonucleoside 5'-diphosphate + phosphate + H(+). In terms of biological role, has nucleotide phosphatase activity towards ATP, GTP, CTP, TTP and UTP. May hydrolyze nucleoside diphosphates with lower efficiency. The sequence is that of Nucleoside-triphosphatase THEP1 from Metallosphaera sedula (strain ATCC 51363 / DSM 5348 / JCM 9185 / NBRC 15509 / TH2).